We begin with the raw amino-acid sequence, 538 residues long: Myeloid cell nuclear differentiation antigen-like protein (538 aa).

Residues 1–87 (MAEYKKIVLL…AKKLKTEKAK (87 aa)) enclose the Pyrin domain. The disordered stretch occupies residues 120–306 (SYKSVPSSKK…PQPQNQNIPR (187 aa)). 2 stretches are compositionally biased toward basic and acidic residues: residues 135 to 153 (AKTEGEKKNKLTQDQDHLP) and 245 to 262 (RREEETGVKKSKAAKEPD). Low complexity predominate over residues 276-305 (SPILHSSSSASSNIPSATNQKPQPQNQNIP). The HIN-200 domain maps to 299 to 499 (PQNQNIPRGA…CGDHSFVKIK (201 aa)).

Belongs to the HIN-200 family. As to expression, highest expression observed in spleen and thymus with moderate levels in bone marrow, lung, skin and heart, low levels in muscle, liver and intestine and little or no expression in brain and pancreas.

It is found in the nucleus. Suppresses cell growth when expressed ectopically. The protein is Myeloid cell nuclear differentiation antigen-like protein of Mus musculus (Mouse).